A 544-amino-acid polypeptide reads, in one-letter code: Membrane protein insertase YidC (544 aa).

The segment at 29–58 is disordered; that stretch reads TPKADPSATTQTLNPTSSESEDYVPTSSDS. Polar residues predominate over residues 35 to 46; that stretch reads SATTQTLNPTSS. The next 3 membrane-spanning stretches (helical) occupy residues 341-361, 421-441, and 499-519; these read FVLL…IIAI, GGCF…YVFL, and PVIF…YWLV.

This sequence belongs to the OXA1/ALB3/YidC family. Type 1 subfamily. In terms of assembly, interacts with the Sec translocase complex via SecD. Specifically interacts with transmembrane segments of nascent integral membrane proteins during membrane integration.

The protein localises to the cell inner membrane. In terms of biological role, required for the insertion and/or proper folding and/or complex formation of integral membrane proteins into the membrane. Involved in integration of membrane proteins that insert both dependently and independently of the Sec translocase complex, as well as at least some lipoproteins. Aids folding of multispanning membrane proteins. In Pseudoalteromonas translucida (strain TAC 125), this protein is Membrane protein insertase YidC.